A 114-amino-acid chain; its full sequence is Evasin-1 (114 aa).

Residues 1–20 (MTFKACIAIITALCAMQVIC) form the signal peptide. Cystine bridges form between cysteine 32–cysteine 53, cysteine 49–cysteine 90, cysteine 66–cysteine 95, and cysteine 85–cysteine 104. Residues asparagine 39, asparagine 54, and asparagine 62 are each glycosylated (N-linked (GlcNAc...) asparagine).

The protein belongs to the evasin C8 family. In terms of assembly, monomer.

The protein localises to the secreted. Its function is as follows. Salivary chemokine-binding protein which shows chemokine neutralizing activity and binds to host chemokines CCL3, CCL4 and CCL18. Binds to CCL3 with 1:1 stoichiometry. This is Evasin-1 from Rhipicephalus sanguineus (Brown dog tick).